The primary structure comprises 111 residues: MKAHKETSAGVVMSSPMATPELDEAIEVDVATSENLPWMCIVWDDPVNLMSYVSYVFQTVLGYDKKRANELMMQVHTEGKAAVSSGERDKVEADVKKLQVAGLWATMQQAG.

This sequence belongs to the ClpS family. As to quaternary structure, binds to the N-terminal domain of the chaperone ClpA.

In terms of biological role, involved in the modulation of the specificity of the ClpAP-mediated ATP-dependent protein degradation. The chain is ATP-dependent Clp protease adapter protein ClpS from Corynebacterium aurimucosum (strain ATCC 700975 / DSM 44827 / CIP 107346 / CN-1) (Corynebacterium nigricans).